Consider the following 221-residue polypeptide: Ribosomal RNA large subunit methyltransferase E (221 aa).

5 residues coordinate S-adenosyl-L-methionine: Gly60, Trp62, Asp89, Asp105, and Asp134. Lys174 acts as the Proton acceptor in catalysis.

This sequence belongs to the class I-like SAM-binding methyltransferase superfamily. RNA methyltransferase RlmE family.

Its subcellular location is the cytoplasm. It carries out the reaction uridine(2552) in 23S rRNA + S-adenosyl-L-methionine = 2'-O-methyluridine(2552) in 23S rRNA + S-adenosyl-L-homocysteine + H(+). Specifically methylates the uridine in position 2552 of 23S rRNA at the 2'-O position of the ribose in the fully assembled 50S ribosomal subunit. This chain is Ribosomal RNA large subunit methyltransferase E, found in Cupriavidus metallidurans (strain ATCC 43123 / DSM 2839 / NBRC 102507 / CH34) (Ralstonia metallidurans).